The following is an 871-amino-acid chain: Rho guanine nucleotide exchange factor 26 (871 aa).

Disordered stretches follow at residues 1–49 (MDGE…LLIT), 86–233 (AQRR…NPSV), and 288–310 (PLGH…SLRR). S22 is modified (phosphoserine). Pro residues predominate over residues 136–156 (PAPPPPPVLRPPRTPNAPAPC). The segment covering 173 to 192 (PTANGLAANNDSPGSGSQSG) has biased composition (polar residues). At S392 the chain carries Phosphoserine. The DH domain maps to 439-623 (KRQEAIFEVI…SKLVRLCNEG (185 aa)). The 128-residue stretch at 655-782 (WLVKRGELTA…WITALGHSSG (128 aa)) folds into the PH domain. The region spanning 789-850 (TSLTQVEIVR…PMECAKEITC (62 aa)) is the SH3 domain.

In terms of assembly, interacts with ICAM1 and RHOG. Isoform 1 is broadly expressed, with highest levels in liver (at protein level). Certain mRNA species appear to be specifically expressed in prostate and liver.

It localises to the cell projection. Its subcellular location is the ruffle. Functionally, activates RhoG GTPase by promoting the exchange of GDP by GTP. Required for the formation of membrane ruffles during macropinocytosis. Required for the formation of cup-like structures during trans-endothelial migration of leukocytes. In case of Salmonella enterica infection, activated by SopB, which induces cytoskeleton rearrangements and promotes bacterial entry. The polypeptide is Rho guanine nucleotide exchange factor 26 (ARHGEF26) (Homo sapiens (Human)).